A 215-amino-acid chain; its full sequence is Chaperone protein TorD (215 aa).

It belongs to the TorD/DmsD family. TorD subfamily.

Its subcellular location is the cytoplasm. Involved in the biogenesis of TorA. Acts on TorA before the insertion of the molybdenum cofactor and, as a result, probably favors a conformation of the apoenzyme that is competent for acquiring the cofactor. This chain is Chaperone protein TorD, found in Vibrio vulnificus (strain CMCP6).